The sequence spans 152 residues: Transcriptional regulator MraZ (152 aa).

2 consecutive SpoVT-AbrB domains span residues 5 to 52 and 81 to 124; these read ASAV…PLNQ and ATEC…SESE.

This sequence belongs to the MraZ family. In terms of assembly, forms oligomers.

The protein resides in the cytoplasm. Its subcellular location is the nucleoid. The protein is Transcriptional regulator MraZ of Histophilus somni (strain 2336) (Haemophilus somnus).